Reading from the N-terminus, the 513-residue chain is Xyloglucan 6-xylosyltransferase 4 (513 aa).

At 1–39 the chain is on the cytoplasmic side; the sequence is MFQDGSRSSGSGRGLSTTAVSNGGWRTRGFLRGWQIQNT. A helical; Signal-anchor for type II membrane protein transmembrane segment spans residues 40–60; it reads LFNNIKFMILCCFVTILILLG. The Lumenal segment spans residues 61-513; the sequence is TIRVGNLGSS…IRRMHMETKP (453 aa). N-linked (GlcNAc...) asparagine glycosylation is found at N76, N110, N142, N174, and N490.

It belongs to the glycosyltransferase 34 family.

It localises to the golgi apparatus membrane. It catalyses the reaction Transfers an alpha-D-xylosyl residue from UDP-D-xylose to a glucose residue in xyloglucan, forming an alpha-(1-&gt;6)-D-xylosyl-D-glucose linkage.. Functionally, xylosyltransferase specific to UDP-D-xylose that accepts cellohexaose as substrate to produce xyloglucan. The sequence is that of Xyloglucan 6-xylosyltransferase 4 from Arabidopsis thaliana (Mouse-ear cress).